Here is a 382-residue protein sequence, read N- to C-terminus: Chaperone protein DnaJ (382 aa).

The J domain maps to 5-70; the sequence is DYYEVLGVSR…DKKAAYDRYG (66 aa). The CR-type zinc-finger motif lies at 141–219; it reads GVQKTINVPA…CHGAGRVEKE (79 aa). Residues Cys154, Cys157, Cys171, Cys174, Cys193, Cys196, Cys207, and Cys210 each coordinate Zn(2+). CXXCXGXG motif repeat units lie at residues 154-161, 171-178, 193-200, and 207-214; these read CDSCKGTG, CPTCSGMG, CPTCNGMG, and CKSCHGAG.

It belongs to the DnaJ family. As to quaternary structure, homodimer. The cofactor is Zn(2+).

The protein resides in the cytoplasm. In terms of biological role, participates actively in the response to hyperosmotic and heat shock by preventing the aggregation of stress-denatured proteins and by disaggregating proteins, also in an autonomous, DnaK-independent fashion. Unfolded proteins bind initially to DnaJ; upon interaction with the DnaJ-bound protein, DnaK hydrolyzes its bound ATP, resulting in the formation of a stable complex. GrpE releases ADP from DnaK; ATP binding to DnaK triggers the release of the substrate protein, thus completing the reaction cycle. Several rounds of ATP-dependent interactions between DnaJ, DnaK and GrpE are required for fully efficient folding. Also involved, together with DnaK and GrpE, in the DNA replication of plasmids through activation of initiation proteins. This Cereibacter sphaeroides (strain ATCC 17025 / ATH 2.4.3) (Rhodobacter sphaeroides) protein is Chaperone protein DnaJ.